Consider the following 328-residue polypeptide: GTPase Obg 2 (328 aa).

One can recognise an Obg domain in the interval 1-139 (MSFRREKFIE…HCVLLKLKIV (139 aa)). In terms of domain architecture, OBG-type G spans 140 to 309 (SDVGIIGMPN…LHAQVKKAVV (170 aa)). GTP-binding positions include 146 to 153 (GMPNAGKS), 171 to 175 (FTTLE), 192 to 195 (DIPG), 259 to 262 (NKCD), and 290 to 292 (GDE). Positions 153 and 173 each coordinate Mg(2+).

It belongs to the TRAFAC class OBG-HflX-like GTPase superfamily. OBG GTPase family. As to quaternary structure, monomer. Mg(2+) is required as a cofactor.

The protein localises to the cytoplasm. In terms of biological role, an essential GTPase which binds GTP, GDP and possibly (p)ppGpp with moderate affinity, with high nucleotide exchange rates and a fairly low GTP hydrolysis rate. Plays a role in control of the cell cycle, stress response, ribosome biogenesis and in those bacteria that undergo differentiation, in morphogenesis control. This chain is GTPase Obg 2, found in Anaplasma marginale (strain Florida).